The sequence spans 146 residues: Probable actin-related protein 2/3 complex subunit 5 (146 aa).

This sequence belongs to the ARPC5 family. Component of the Arp2/3 complex composed of ARP2, ARP3, ARPC1B/p41-ARC, ARPC2/p34-ARC, ARPC3/p21-ARC, ARPC4/p20-ARC and ARPC5/p16-ARC.

The protein localises to the cytoplasm. It localises to the cytoskeleton. Functions as a component of the Arp2/3 complex which is involved in regulation of actin polymerization and together with an activating nucleation-promoting factor (NPF) mediates the formation of branched actin networks. In Caenorhabditis elegans, this protein is Probable actin-related protein 2/3 complex subunit 5.